Here is a 364-residue protein sequence, read N- to C-terminus: Mitogen-activated protein kinase 11 (364 aa).

The region spanning 24 to 308 (LQGLRPVGSG…AAEALAHAYF (285 aa)) is the Protein kinase domain. ATP contacts are provided by residues 30–38 (VGSGAYGSV) and Lys-53. Residue Glu-71 participates in nilotinib binding. Catalysis depends on Asp-150, which acts as the Proton acceptor. Phosphothreonine; by MAP2K3, MAP2K4 and MAP2K6 is present on Thr-180. The TXY signature appears at 180–182 (TGY). A Phosphotyrosine; by MAP2K3, MAP2K4 and MAP2K6 modification is found at Tyr-182. Disordered stretches follow at residues 311-331 (YHDP…EAKE) and 343-364 (QEVL…EIEQ). Residues 314–326 (PEDEPEAEPYDES) show a composition bias toward acidic residues. The residue at position 323 (Tyr-323) is a Phosphotyrosine; by ZAP70.

Belongs to the protein kinase superfamily. CMGC Ser/Thr protein kinase family. MAP kinase subfamily. In terms of assembly, interacts with HDAC3 and DUSP16. Mg(2+) is required as a cofactor. Dually phosphorylated on Thr-180 and Tyr-182 by MAP2K3/MKK3, MAP2K4/MKK4 and MAP2K6/MKK6, which activates the enzyme. As to expression, highest levels in the brain and heart. Also expressed in the placenta, lung, liver, skeletal muscle, kidney and pancreas.

Its subcellular location is the cytoplasm. It is found in the nucleus. It carries out the reaction L-seryl-[protein] + ATP = O-phospho-L-seryl-[protein] + ADP + H(+). The catalysed reaction is L-threonyl-[protein] + ATP = O-phospho-L-threonyl-[protein] + ADP + H(+). Activated by phosphorylation on threonine and tyrosine by MAP2K3/MKK3, MAP2K4/MKK4 and MAP2K6/MKK6. MAP2K3/MKK3 and MAP2K6/MKK6 are both essential for the activation of MAPK11 induced by environmental stress. HDAC3 interacts directly and selectively with MAPK11 to repress ATF2 transcriptional activity, and regulate TNF gene expression in LPS-stimulated cells. Inhibited by SB203580 and pyridinyl-imidazole related compounds. Serine/threonine kinase which acts as an essential component of the MAP kinase signal transduction pathway. MAPK11 is one of the four p38 MAPKs which play an important role in the cascades of cellular responses evoked by extracellular stimuli such as pro-inflammatory cytokines or physical stress leading to direct activation of transcription factors. Accordingly, p38 MAPKs phosphorylate a broad range of proteins and it has been estimated that they may have approximately 200 to 300 substrates each. MAPK11 functions are mostly redundant with those of MAPK14. Some of the targets are downstream kinases which are activated through phosphorylation and further phosphorylate additional targets. RPS6KA5/MSK1 and RPS6KA4/MSK2 can directly phosphorylate and activate transcription factors such as CREB1, ATF1, the NF-kappa-B isoform RELA/NFKB3, STAT1 and STAT3, but can also phosphorylate histone H3 and the nucleosomal protein HMGN1. RPS6KA5/MSK1 and RPS6KA4/MSK2 play important roles in the rapid induction of immediate-early genes in response to stress or mitogenic stimuli, either by inducing chromatin remodeling or by recruiting the transcription machinery. On the other hand, two other kinase targets, MAPKAPK2/MK2 and MAPKAPK3/MK3, participate in the control of gene expression mostly at the post-transcriptional level, by phosphorylating ZFP36 (tristetraprolin) and ELAVL1, and by regulating EEF2K, which is important for the elongation of mRNA during translation. MKNK1/MNK1 and MKNK2/MNK2, two other kinases activated by p38 MAPKs, regulate protein synthesis by phosphorylating the initiation factor EIF4E2. In the cytoplasm, the p38 MAPK pathway is an important regulator of protein turnover. For example, CFLAR is an inhibitor of TNF-induced apoptosis whose proteasome-mediated degradation is regulated by p38 MAPK phosphorylation. Ectodomain shedding of transmembrane proteins is regulated by p38 MAPKs as well. In response to inflammatory stimuli, p38 MAPKs phosphorylate the membrane-associated metalloprotease ADAM17. Such phosphorylation is required for ADAM17-mediated ectodomain shedding of TGF-alpha family ligands, which results in the activation of EGFR signaling and cell proliferation. Additional examples of p38 MAPK substrates are the FGFR1. FGFR1 can be translocated from the extracellular space into the cytosol and nucleus of target cells, and regulates processes such as rRNA synthesis and cell growth. FGFR1 translocation requires p38 MAPK activation. In the nucleus, many transcription factors are phosphorylated and activated by p38 MAPKs in response to different stimuli. Classical examples include ATF1, ATF2, ATF6, ELK1, PTPRH, DDIT3, TP53/p53 and MEF2C and MEF2A. The p38 MAPKs are emerging as important modulators of gene expression by regulating chromatin modifiers and remodelers. The promoters of several genes involved in the inflammatory response, such as IL6, IL8 and IL12B, display a p38 MAPK-dependent enrichment of histone H3 phosphorylation on 'Ser-10' (H3S10ph) in LPS-stimulated myeloid cells. This phosphorylation enhances the accessibility of the cryptic NF-kappa-B-binding sites marking promoters for increased NF-kappa-B recruitment. Phosphorylates NLRP1 downstream of MAP3K20/ZAK in response to UV-B irradiation and ribosome collisions, promoting activation of the NLRP1 inflammasome and pyroptosis. Phosphorylates methyltransferase DOT1L on 'Ser-834', 'Thr-900', 'Ser-902', 'Thr-984', 'Ser-1001', 'Ser-1009' and 'Ser-1104'. The protein is Mitogen-activated protein kinase 11 (MAPK11) of Homo sapiens (Human).